A 205-amino-acid chain; its full sequence is uncharacterized protein (205 aa).

The 61-residue stretch at Lys-11 to Leu-71 folds into the HTH tetR-type domain.

This is an uncharacterized protein from Haemophilus influenzae (strain ATCC 51907 / DSM 11121 / KW20 / Rd).